A 284-amino-acid chain; its full sequence is 4-diphosphocytidyl-2-C-methyl-D-erythritol kinase (284 aa).

Residue K14 is part of the active site. Residue 98 to 108 (PMGGGLGGGSS) coordinates ATP. Residue D140 is part of the active site.

This sequence belongs to the GHMP kinase family. IspE subfamily.

The enzyme catalyses 4-CDP-2-C-methyl-D-erythritol + ATP = 4-CDP-2-C-methyl-D-erythritol 2-phosphate + ADP + H(+). It functions in the pathway isoprenoid biosynthesis; isopentenyl diphosphate biosynthesis via DXP pathway; isopentenyl diphosphate from 1-deoxy-D-xylulose 5-phosphate: step 3/6. Catalyzes the phosphorylation of the position 2 hydroxy group of 4-diphosphocytidyl-2C-methyl-D-erythritol. The protein is 4-diphosphocytidyl-2-C-methyl-D-erythritol kinase of Shewanella denitrificans (strain OS217 / ATCC BAA-1090 / DSM 15013).